The following is a 246-amino-acid chain: Small ribosomal subunit protein uS2 (246 aa).

The protein belongs to the universal ribosomal protein uS2 family.

In Burkholderia thailandensis (strain ATCC 700388 / DSM 13276 / CCUG 48851 / CIP 106301 / E264), this protein is Small ribosomal subunit protein uS2.